A 230-amino-acid chain; its full sequence is Cytochrome b6-f complex iron-sulfur subunit, chloroplastic (230 aa).

Residues 1-50 (MSSTTLSPTTPSQLCSGKSGISCPSIALLVKPTRTQMTGRGNKGMKITCQ) constitute a chloroplast transit peptide. Residues 72 to 92 (LLGALSLPTAGMLVPYGSFLV) traverse the membrane as a helical segment. Residues 115-213 (ATEWLKTHAP…VGVEDGKVVF (99 aa)) form the Rieske domain. The [2Fe-2S] cluster site is built by C157, H159, C175, and H178. C162 and C177 are disulfide-bonded.

This sequence belongs to the Rieske iron-sulfur protein family. As to quaternary structure, the 4 large subunits of the cytochrome b6-f complex are cytochrome b6, subunit IV (17 kDa polypeptide, petD), cytochrome f and the Rieske protein, while the 4 small subunits are petG, petL, petM and petN. The complex functions as a dimer. It depends on [2Fe-2S] cluster as a cofactor.

Its subcellular location is the plastid. It localises to the chloroplast thylakoid membrane. It catalyses the reaction 2 oxidized [plastocyanin] + a plastoquinol + 2 H(+)(in) = 2 reduced [plastocyanin] + a plastoquinone + 4 H(+)(out). In terms of biological role, component of the cytochrome b6-f complex, which mediates electron transfer between photosystem II (PSII) and photosystem I (PSI), cyclic electron flow around PSI, and state transitions. In Pisum sativum (Garden pea), this protein is Cytochrome b6-f complex iron-sulfur subunit, chloroplastic (petC).